The primary structure comprises 295 residues: Trimeric intracellular cation channel type A (295 aa).

Over 1–18 the chain is Lumenal; the sequence is MELLSALSLDDLAASFSK. Residues 19 to 39 traverse the membrane as a helical segment; that stretch reads LPVFPLFDVAYYIISILYLKY. Topologically, residues 40 to 51 are cytoplasmic; sequence EPGAVDLSKRSP. Residues 52 to 72 form a helical membrane-spanning segment; sequence VASWLCAMLYCFGSYILADVL. The Lumenal segment spans residues 73-84; the sequence is LGESPIHYFSNN. Gly74 serves as a coordination point for Ca(2+). A helical transmembrane segment spans residues 85-105; sequence ANILLASAVWYLTFFCPLNIF. Residues 106–144 lie on the Cytoplasmic side of the membrane; that stretch reads YKIVSFLPVKLVLVGMKEVVRVRKIAMGIHHAHHHYHHG. A 1,2-diacyl-sn-glycero-3-phospho-(1D-myo-inositol-4,5-bisphosphate) contacts are provided by Lys122 and Arg126. The chain crosses the membrane as a helical span at residues 145 to 165; that stretch reads WVIMVLIGWVKGSGVALMSNL. At 166–178 the chain is on the lumenal side; that stretch reads EQLLRGVWKPETN. The helical transmembrane segment at 179 to 199 threads the bilayer; sequence EILHMSFPTKASLYGAILFTL. Topologically, residues 200-201 are cytoplasmic; sequence QQ. Residues 202 to 222 form a helical membrane-spanning segment; it reads AHWLPISKAYLIFFFTLFMAV. The Lumenal portion of the chain corresponds to 223 to 233; sequence CKIYMTATHSH. A helical transmembrane segment spans residues 234–254; sequence GSPFAIFESGICYVLFAAANG. The Cytoplasmic portion of the chain corresponds to 255 to 295; that stretch reads DHDDHGNHHHHHDDHDVSHSAGKSKEEHNEGTRKRKTKKAE. Residues 258–295 are disordered; sequence DHGNHHHHHDDHDVSHSAGKSKEEHNEGTRKRKTKKAE. The span at 267–286 shows a compositional bias: basic and acidic residues; sequence DDHDVSHSAGKSKEEHNEGT.

This sequence belongs to the TMEM38 family. As to quaternary structure, homotrimer; conformation seems to be controled by binding to diacylglycerol (DAG).

It localises to the sarcoplasmic reticulum membrane. The protein resides in the nucleus membrane. It catalyses the reaction K(+)(in) = K(+)(out). Its activity is regulated as follows. Channel activity is activated by a change of voltage within the sarcoplasmic reticulum lumen and blocked by luminal high Ca(2+) levels. In terms of biological role, intracellular monovalent cation channel required for maintenance of rapid intracellular calcium release. Acts as a potassium counter-ion channel that functions in synchronization with calcium release from intracellular stores. Opened by a change of voltage within the sarcoplasmic reticulum lumen. This is Trimeric intracellular cation channel type A (tmem38a) from Xenopus laevis (African clawed frog).